The chain runs to 428 residues: Enolase (428 aa).

Gln-163 serves as a coordination point for (2R)-2-phosphoglycerate. Residue Glu-205 is the Proton donor of the active site. Residues Asp-242, Glu-286, and Asp-313 each coordinate Mg(2+). (2R)-2-phosphoglycerate contacts are provided by Lys-338, Arg-367, Ser-368, and Lys-389. Lys-338 functions as the Proton acceptor in the catalytic mechanism.

It belongs to the enolase family. Requires Mg(2+) as cofactor.

The protein resides in the cytoplasm. Its subcellular location is the secreted. The protein localises to the cell surface. The catalysed reaction is (2R)-2-phosphoglycerate = phosphoenolpyruvate + H2O. It functions in the pathway carbohydrate degradation; glycolysis; pyruvate from D-glyceraldehyde 3-phosphate: step 4/5. Catalyzes the reversible conversion of 2-phosphoglycerate (2-PG) into phosphoenolpyruvate (PEP). It is essential for the degradation of carbohydrates via glycolysis. The protein is Enolase of Syntrophus aciditrophicus (strain SB).